We begin with the raw amino-acid sequence, 461 residues long: E3 ubiquitin-protein ligase TRIM15 (461 aa).

Residues 12-57 (CSDCQGRLEDAVTAACGHTFCRLCLPLPPQMGAQPSSRVLLCPVCQ) form an RING-type zinc finger. The B box-type zinc finger occupies 74-115 (LGETYCEEHGEKIYFFCENDAEFLCVFCREGPSHQAHAVGFL). 4 residues coordinate Zn(2+): C79, H82, C101, and H107. Positions 123–230 (RDRLRGRLEA…EKCQQPASEL (108 aa)) form a coiled coil. Positions 272-461 (EMLRAFSENL…KKGSCLTLKG (190 aa)) constitute a B30.2/SPRY domain.

Belongs to the TRIM/RBCC family. Interacts with paxillin/PXN; this interaction recruits TRIM15 to focal adhesions. Interacts with TRIM8; this interaction prevents TRIM8 cytoplasmic translocation.

The protein localises to the cytoplasm. It is found in the nucleus. It localises to the cell junction. The protein resides in the focal adhesion. It carries out the reaction S-ubiquitinyl-[E2 ubiquitin-conjugating enzyme]-L-cysteine + [acceptor protein]-L-lysine = [E2 ubiquitin-conjugating enzyme]-L-cysteine + N(6)-ubiquitinyl-[acceptor protein]-L-lysine.. In terms of biological role, E3 ubiquitin ligase that plays a role in several processes including innate antiviral immnity, cell migration and chemotaxis. Acts as a 'Lys-63'-specific ubiquitin ligase for MAPK1/ERK2 and MAPK3/ERK1, promoting their activation by facilitating their interaction with MAP2K1 and MAP2K2. Also plays a role in cell migration and chemotaxis by acting as a stable focal adhesion component upon recruitment by multi-adapter protein paxillin/PXN. Functions in the RIGI-mediated interferon induction pathway upstream or at the level of MAVS. Inhibits NF-kappa-B activation by turnover of 'Lys-63'-linked ubiquitination of MAP3K7/TAK1. Mechanistically, prevents TRIM8 cytoplasmic translocation and thus inhibits TRIM8-mediated 'Lys-63'-linked polyubiquitination of MAP3K7/TAK1 in the cytoplasm. Also has an important regulatory effect on the activation of hepatic stellate cells (HSCs). This is E3 ubiquitin-protein ligase TRIM15 (TRIM15) from Sus scrofa (Pig).